Here is a 568-residue protein sequence, read N- to C-terminus: Serine/threonine-protein kinase WNK2 (568 aa).

Positions 24–281 constitute a Protein kinase domain; sequence GRYDEILGKG…ALELLQDPFL (258 aa). Residues 104–107 and Lys154 contribute to the ATP site; that span reads TELF. The Proton acceptor role is filled by Asp171. The tract at residues 453-473 is disordered; that stretch reads SSGEKSHHNHHEFDSSEDKSC. A compositionally biased stretch (basic and acidic residues) spans 463–472; that stretch reads HEFDSSEDKS.

It belongs to the protein kinase superfamily. Ser/Thr protein kinase family. WNK subfamily. In terms of processing, autophosphorylated.

It carries out the reaction L-seryl-[protein] + ATP = O-phospho-L-seryl-[protein] + ADP + H(+). The catalysed reaction is L-threonyl-[protein] + ATP = O-phospho-L-threonyl-[protein] + ADP + H(+). Regulates flowering time by modulating the photoperiod pathway. Possesses kinase activity in vitro. This chain is Serine/threonine-protein kinase WNK2 (WNK2), found in Arabidopsis thaliana (Mouse-ear cress).